The primary structure comprises 588 residues: Glutathione/L-cysteine transport system ATP-binding/permease protein CydD (588 aa).

At 1-15 the chain is on the cytoplasmic side; that stretch reads MNKSRQKELTRWLKQ. The next 2 helical transmembrane spans lie at 16–36 and 37–57; these read QSVISQRWLNISRLLGFVSGI and LIIAQAWFMARILQHMIMENI. The ABC transmembrane type-1 domain maps to 20 to 306; sequence SQRWLNISRL…APEFFQPLRD (287 aa). Residues 58–136 lie on the Cytoplasmic side of the membrane; that stretch reads PREALLLPFT…LEQIDDMHDY (79 aa). The chain crosses the membrane as a helical span at residues 137 to 157; the sequence is YARYLPQMALAVSVPLLIVVA. Over 158–161 the chain is Periplasmic; sequence IFPS. Residues 162 to 182 form a helical membrane-spanning segment; the sequence is NWAAALILLGTAPLIPLFMAL. Topologically, residues 183 to 249 are cytoplasmic; that stretch reads VGMGAADANR…MEVLRLAFLS (67 aa). A helical transmembrane segment spans residues 250 to 270; the sequence is SGILEFFTSLSIALVAVYFGF. Over 271–276 the chain is Periplasmic; sequence SYLGEL. The chain crosses the membrane as a helical span at residues 277-297; sequence DFGHYDTGVTLAAGFLALILA. At 298 to 573 the chain is on the cytoplasmic side; it reads PEFFQPLRDL…QGRYAELSVA (276 aa). The ABC transporter domain occupies 339–572; sequence EAELASTDPV…EQGRYAELSV (234 aa). ATP is bound at residue 373–380; the sequence is LPAGQRAV.

Belongs to the ABC transporter superfamily. Cysteine exporter (TC 3.A.1.129.1) family. As to quaternary structure, forms a heterodimer with CydC.

The protein resides in the cell inner membrane. The catalysed reaction is L-cysteine(in) + ATP + H2O = L-cysteine(out) + ADP + phosphate + H(+). It carries out the reaction glutathione(in) + ATP + H2O = glutathione(out) + ADP + phosphate + H(+). ATPase activity is stimulated by various thiol compounds. The presence of heme leads to a further enhancement of thiol-stimulated ATPase activity, although a large excess of heme inhibits activity. Glutathione transport is inhibited by sodium orthovanadate, an inhibitor of ABC-type transport systems, but not by the proton ionophore carbonyl cyanide m-chlorophenylhydrazone (CCCP). In terms of biological role, part of the ABC transporter complex CydDC that exports the reduced low-molecular-weight thiols cysteine and glutathione to the periplasm. Export of these thiol-containing redox-active molecules may be crucial for redox homeostasis in the periplasm, permitting correct assembly of various respiratory complexes and formation of correct disulfide bonds in periplasmic and secreted proteins. CydD contains transmembrane domains (TMD), which form a pore in the inner membrane, and an ATP-binding domain (NBD), which is responsible for energy generation. Required for the assembly of functional cytochrome bd-type quinol oxidases and periplasmic c-type cytochromes. Overexpression of CydDC under anaerobic conditions also results in the formation of a heme biosynthesis-derived pigment, P-574. CydDC binds heme b, but heme is probably not transported by the complex and instead has a role in regulating ATPase activity. Conversely, a more recent study suggests an alternative function of CydDC: authors suggest that CydDC does not mediate the export of L-cysteine but rather reduces cytoplasmic L-cystine to L-cysteine. The principle function of CydDC would be to maintain the reduced state of cytoplasmic L-cysteine, thereby providing an important connection between sulfur metabolism, oxidative stress and resistance to antibiotics. The chain is Glutathione/L-cysteine transport system ATP-binding/permease protein CydD from Escherichia coli (strain K12).